The following is a 199-amino-acid chain: Recombination protein RecR (199 aa).

The C4-type zinc-finger motif lies at 57–72 (CQSCRTFTEETYCPIC). Residues 81 to 176 (SVICVVETPA…AVSRIAHGVP (96 aa)) enclose the Toprim domain.

Belongs to the RecR family.

In terms of biological role, may play a role in DNA repair. It seems to be involved in an RecBC-independent recombinational process of DNA repair. It may act with RecF and RecO. The protein is Recombination protein RecR of Shewanella piezotolerans (strain WP3 / JCM 13877).